A 270-amino-acid polypeptide reads, in one-letter code: MSTNINEEKCLEGDDIKYEKPDTHKNFWKSFGLNNEAGKLLYHLYGESNKIKPNILSSKHDGDKNKNDKKKEDAKLNTTYRKPQIHYPSLKKKAVKENPIDTIKHRKPLSKILEETQNYDCIKDIPISIGMNRETEKNKLHNIFVEEKCLMVPPSCAPMILTQEEKKEIIEKAQQRYIYINEENKSREEKHIQALRNYKLELIQELNEKRKLLQDIINEDKNIQGNISINQSDKRVSNKGNSYNIIQIKNDIEQCQKSIKKIEDNLNTYE.

Disordered stretches follow at residues 1–21 (MSTN…YEKP) and 53–77 (PNIL…AKLN). Positions 58–75 (SKHDGDKNKNDKKKEDAK) are enriched in basic and acidic residues. A coiled-coil region spans residues 182–270 (EENKSREEKH…KIEDNLNTYE (89 aa)).

This is an uncharacterized protein from Plasmodium falciparum (isolate 3D7).